Consider the following 77-residue polypeptide: Protein RADIALIS-like 4 (77 aa).

One can recognise an SANT domain in the interval 6-61; that stretch reads MSTSSWTAREDKQFEMALAKFDKDTPDRWQKIARAVGGKSTEEVKRHYELLLRDVN.

As to expression, expressed just outside the vascular bundles in the rosette stem and the leaf traces. Not detected in floral primordia.

It is found in the nucleus. Probable transcription factor. This is Protein RADIALIS-like 4 (RL4) from Arabidopsis thaliana (Mouse-ear cress).